The sequence spans 150 residues: Allograft inflammatory factor 1-like (150 aa).

S2 carries the post-translational modification N-acetylserine. Residue S2 is modified to Phosphoserine. Residues 47 to 82 enclose the EF-hand 1 domain; sequence EKLTAFKEKYMEFDLNNEGEIDLMSLKRMMEKLGVP. Positions 60, 62, 64, and 66 each coordinate Ca(2+). An EF-hand 2; degenerate domain is found at 83–117; that stretch reads KTHLEMKKMISEVTGGVSDTISYRDFVNMMLGKRS. A disordered region spans residues 129-150; sequence KANESSPKPVGPPPERDIASLP. S134 carries the post-translational modification Phosphoserine.

In terms of assembly, homodimer (Potential). Monomer.

It localises to the cytoplasm. Its subcellular location is the cytoskeleton. The protein localises to the cell projection. The protein resides in the ruffle membrane. Actin-binding protein that promotes actin bundling. May neither bind calcium nor depend on calcium for function. The chain is Allograft inflammatory factor 1-like (AIF1L) from Homo sapiens (Human).